The chain runs to 291 residues: N-acetylmannosamine kinase (291 aa).

Residues 5-12 (AIDIGGTK) and 132-139 (GVGGGVVS) contribute to the ATP site. H156, C166, C168, and C173 together coordinate Zn(2+).

Belongs to the ROK (NagC/XylR) family. NanK subfamily. As to quaternary structure, homodimer.

The enzyme catalyses an N-acyl-D-mannosamine + ATP = an N-acyl-D-mannosamine 6-phosphate + ADP + H(+). The protein operates within amino-sugar metabolism; N-acetylneuraminate degradation; D-fructose 6-phosphate from N-acetylneuraminate: step 2/5. Its function is as follows. Catalyzes the phosphorylation of N-acetylmannosamine (ManNAc) to ManNAc-6-P. This is N-acetylmannosamine kinase from Escherichia coli O9:H4 (strain HS).